Here is a 144-residue protein sequence, read N- to C-terminus: MLGSFFFLAIISCVMSYINVDPMKSSFFLIFSLLMVMPLISFFLHVWFSYFICLLFLSGIFVILVYFSSLSKIGYVVTPFYFVGGVLSVFFFYPFFYSVTDVVAVNNFYFSVYWMLLVWVIFVLIFFMNFTSYFLNFSGALRKV.

Transmembrane regions (helical) follow at residues 1–21, 26–46, 47–67, 76–96, and 108–128; these read MLGS…INVD, SFFL…FLHV, WFSY…LVYF, VVTP…YPFF, and FYFS…IFFM.

This sequence belongs to the complex I subunit 6 family.

The protein localises to the mitochondrion membrane. It catalyses the reaction a ubiquinone + NADH + 5 H(+)(in) = a ubiquinol + NAD(+) + 4 H(+)(out). Its function is as follows. Core subunit of the mitochondrial membrane respiratory chain NADH dehydrogenase (Complex I) that is believed to belong to the minimal assembly required for catalysis. Complex I functions in the transfer of electrons from NADH to the respiratory chain. The immediate electron acceptor for the enzyme is believed to be ubiquinone. The sequence is that of NADH-ubiquinone oxidoreductase chain 6 (ND6) from Ascaris suum (Pig roundworm).